The chain runs to 332 residues: L-lactate dehydrogenase A chain (332 aa).

Residues 29 to 57 (GAVGMACAISILMKDLADELALVDVVEDK) and Arg99 contribute to the NAD(+) site. 3 residues coordinate substrate: Arg106, Asn138, and Arg169. An NAD(+)-binding site is contributed by Asn138. Catalysis depends on His193, which acts as the Proton acceptor. Thr248 contributes to the substrate binding site.

This sequence belongs to the LDH/MDH superfamily. LDH family. In terms of assembly, homotetramer.

It is found in the cytoplasm. It catalyses the reaction (S)-lactate + NAD(+) = pyruvate + NADH + H(+). It functions in the pathway fermentation; pyruvate fermentation to lactate; (S)-lactate from pyruvate: step 1/1. In terms of biological role, interconverts simultaneously and stereospecifically pyruvate and lactate with concomitant interconversion of NADH and NAD(+). The polypeptide is L-lactate dehydrogenase A chain (LDHA) (Python regius (Ball python)).